Consider the following 441-residue polypeptide: Insulinoma-associated protein 1 (441 aa).

Positions 1 to 12 are enriched in basic residues; the sequence is MPKGFLVKRSRK. Residues 1-20 form an SNAG domain region; that stretch reads MPKGFLVKRSRKSPPVSYRV. 4 disordered regions span residues 1–31, 43–189, 205–224, and 278–316; these read MPKG…GESL, TGGA…KAIR, LKIK…SSGP, and RWHK…EDGL. Over residues 19–28 the composition is skewed to basic and acidic residues; the sequence is RVREEEEPRG. Residues 74–83 are compositionally biased toward polar residues; it reads NPDTVQQALY. Basic and acidic residues predominate over residues 89–98; that stretch reads VSREQRERKY. Composition is skewed to low complexity over residues 138–147 and 169–180; these read VSSSSSVSRS and GATSSSAPSKPP. The C2H2-type 1 zinc finger occupies 258–280; it reads YRCPECHKVFSCPANLASHRRWH. Residues 292–302 are compositionally biased toward basic and acidic residues; that stretch reads AKEEPLSDRDT. 3 C2H2-type zinc fingers span residues 317-339, 372-395, and 400-423; these read YECP…LLSH, HPCP…RLLH, and YPCK…NKCH.

This sequence belongs to the INSM1 family.

It localises to the nucleus. Functionally, may act as a transcriptional regulator. Plays a role in noradrenergic neuron, pancreatic and gastrointestinal endocrine cells differentiation during embryonic development. This Xenopus tropicalis (Western clawed frog) protein is Insulinoma-associated protein 1 (insm1).